The sequence spans 137 residues: Hemoglobin subunit alpha-2 (137 aa).

The region spanning 1–137 is the Globin domain; it reads DDRSHILAIW…VGGSLTSKYR (137 aa). Residue histidine 54 participates in O2 binding. Residue histidine 83 participates in heme b binding.

It belongs to the globin family. Post-translationally, the N-terminus of the mature protein is acetylated. As to expression, red blood cells.

This Telmatobius peruvianus (Andean frog) protein is Hemoglobin subunit alpha-2.